Consider the following 166-residue polypeptide: Small ribosomal subunit protein uS5 (166 aa).

The S5 DRBM domain maps to 11 to 74 (LQEKLIAVNR…EKARRNMINV (64 aa)).

Belongs to the universal ribosomal protein uS5 family. Part of the 30S ribosomal subunit. Contacts proteins S4 and S8.

With S4 and S12 plays an important role in translational accuracy. Functionally, located at the back of the 30S subunit body where it stabilizes the conformation of the head with respect to the body. The chain is Small ribosomal subunit protein uS5 from Actinobacillus pleuropneumoniae serotype 5b (strain L20).